The following is a 530-amino-acid chain: Membrane-bound lytic murein transglycosylase F (530 aa).

The signal sequence occupies residues 1-27 (MTPFAYKLPIRALWLGLLSLLLVGCQI). Residues 28–279 (DSEPKSELEK…SLEEKYIGHI (252 aa)) form a non-LT domain region. Positions 280–530 (GAFDYVDTRA…SAKPSTESKN (251 aa)) are LT domain. Glutamate 324 is an active-site residue. The interval 505–530 (ALESESLENSESSAEPSAKPSTESKN) is disordered. The span at 513-530 (NSESSAEPSAKPSTESKN) shows a compositional bias: low complexity.

In the N-terminal section; belongs to the bacterial solute-binding protein 3 family. It in the C-terminal section; belongs to the transglycosylase Slt family.

It localises to the cell outer membrane. It carries out the reaction Exolytic cleavage of the (1-&gt;4)-beta-glycosidic linkage between N-acetylmuramic acid (MurNAc) and N-acetylglucosamine (GlcNAc) residues in peptidoglycan, from either the reducing or the non-reducing ends of the peptidoglycan chains, with concomitant formation of a 1,6-anhydrobond in the MurNAc residue.. Its function is as follows. Murein-degrading enzyme that degrades murein glycan strands and insoluble, high-molecular weight murein sacculi, with the concomitant formation of a 1,6-anhydromuramoyl product. Lytic transglycosylases (LTs) play an integral role in the metabolism of the peptidoglycan (PG) sacculus. Their lytic action creates space within the PG sacculus to allow for its expansion as well as for the insertion of various structures such as secretion systems and flagella. The chain is Membrane-bound lytic murein transglycosylase F from Vibrio cholerae serotype O1 (strain ATCC 39541 / Classical Ogawa 395 / O395).